Here is a 374-residue protein sequence, read N- to C-terminus: Queuine tRNA-ribosyltransferase (374 aa).

D89 acts as the Proton acceptor in catalysis. Substrate contacts are provided by residues 89–93 (DSGGF), D143, Q187, and G214. Residues 245–251 (GVGKPED) are RNA binding. The Nucleophile role is filled by D264. The tract at residues 269 to 273 (TRNAR) is RNA binding; important for wobble base 34 recognition. 4 residues coordinate Zn(2+): C302, C304, C307, and H333.

It belongs to the queuine tRNA-ribosyltransferase family. Homodimer. Within each dimer, one monomer is responsible for RNA recognition and catalysis, while the other monomer binds to the replacement base PreQ1. The cofactor is Zn(2+).

The enzyme catalyses 7-aminomethyl-7-carbaguanine + guanosine(34) in tRNA = 7-aminomethyl-7-carbaguanosine(34) in tRNA + guanine. The protein operates within tRNA modification; tRNA-queuosine biosynthesis. Functionally, catalyzes the base-exchange of a guanine (G) residue with the queuine precursor 7-aminomethyl-7-deazaguanine (PreQ1) at position 34 (anticodon wobble position) in tRNAs with GU(N) anticodons (tRNA-Asp, -Asn, -His and -Tyr). Catalysis occurs through a double-displacement mechanism. The nucleophile active site attacks the C1' of nucleotide 34 to detach the guanine base from the RNA, forming a covalent enzyme-RNA intermediate. The proton acceptor active site deprotonates the incoming PreQ1, allowing a nucleophilic attack on the C1' of the ribose to form the product. After dissociation, two additional enzymatic reactions on the tRNA convert PreQ1 to queuine (Q), resulting in the hypermodified nucleoside queuosine (7-(((4,5-cis-dihydroxy-2-cyclopenten-1-yl)amino)methyl)-7-deazaguanosine). The chain is Queuine tRNA-ribosyltransferase from Shewanella frigidimarina (strain NCIMB 400).